We begin with the raw amino-acid sequence, 714 residues long: Probable serine/threonine-protein kinase mkcB (714 aa).

Residues 1–12 show a composition bias toward basic residues; sequence MKSILKKAKHFF. Disordered regions lie at residues 1–267 and 281–349; these read MKSI…SSTS and GSGS…EQKP. Positions 23–35 are enriched in basic and acidic residues; that stretch reads GGEKTAKESESQQ. A compositionally biased stretch (low complexity) spans 62 to 83; it reads SQSQPTTSALQTSTSLQPSSSL. Positions 84–94 are enriched in polar residues; sequence HQIPQSQSSLE. 2 stretches are compositionally biased toward low complexity: residues 95–111 and 120–166; these read LTTN…TKQL and PHSQ…TLTT. Residues 167 to 177 are compositionally biased toward polar residues; the sequence is PVPSSENLATL. Low complexity-rich tracts occupy residues 178–241 and 254–267; these read STST…QEQT and LSQS…SSTS. Residues 282-294 are compositionally biased toward polar residues; the sequence is SGSTKNKDSSSAP. Composition is skewed to low complexity over residues 300–314 and 324–337; these read NNNN…KNRS and NNNN…KNNN. In terms of domain architecture, Protein kinase spans 438-687; it reads YKDSDQVGKG…AEELLKHPFI (250 aa). Residues 444–452 and lysine 467 each bind ATP; that span reads VGKGGFGTV. Aspartate 558 (proton acceptor) is an active-site residue.

Belongs to the protein kinase superfamily. STE Ser/Thr protein kinase family. STE20 subfamily. Mg(2+) is required as a cofactor. In terms of tissue distribution, expressed at equal levels in prestalk and prespore cells.

It catalyses the reaction L-seryl-[protein] + ATP = O-phospho-L-seryl-[protein] + ADP + H(+). It carries out the reaction L-threonyl-[protein] + ATP = O-phospho-L-threonyl-[protein] + ADP + H(+). This Dictyostelium discoideum (Social amoeba) protein is Probable serine/threonine-protein kinase mkcB.